The primary structure comprises 381 residues: DnaJ-related protein spj1 (381 aa).

In terms of domain architecture, J spans 5 to 74 (NFSQKQILGV…RKIYDAYGEE (70 aa)). The tract at residues 72–93 (GEEGLNGQPGGPGGGPGEGFPG) is disordered. Positions 78–93 (GQPGGPGGGPGEGFPG) are enriched in gly residues. The segment at 138–225 (GGSFTLEIPV…CKGERVAEVV (88 aa)) adopts a CR-type zinc-finger fold. 4 CXXCXGXG motif repeats span residues 151-158 (CSVCSGQG), 172-179 (CPVCGGSG), 199-206 (CNACNGNG), and 213-220 (CPRCKGER). The short motif at 378–381 (FDEL) is the Prevents secretion from ER element.

The protein resides in the endoplasmic reticulum. The chain is DnaJ-related protein spj1 (spj1) from Schizosaccharomyces pombe (strain 972 / ATCC 24843) (Fission yeast).